Reading from the N-terminus, the 276-residue chain is 4-hydroxy-tetrahydrodipicolinate reductase (276 aa).

NAD(+) is bound by residues 18–23 (GASGRM) and Asp44. NADP(+) is bound at residue Arg45. NAD(+) is bound by residues 107-109 (GTT) and 131-134 (APNM). The active-site Proton donor/acceptor is the His164. His165 serves as a coordination point for (S)-2,3,4,5-tetrahydrodipicolinate. Lys168 (proton donor) is an active-site residue. (S)-2,3,4,5-tetrahydrodipicolinate is bound at residue 174–175 (GT).

It belongs to the DapB family.

It localises to the cytoplasm. It carries out the reaction (S)-2,3,4,5-tetrahydrodipicolinate + NAD(+) + H2O = (2S,4S)-4-hydroxy-2,3,4,5-tetrahydrodipicolinate + NADH + H(+). It catalyses the reaction (S)-2,3,4,5-tetrahydrodipicolinate + NADP(+) + H2O = (2S,4S)-4-hydroxy-2,3,4,5-tetrahydrodipicolinate + NADPH + H(+). The protein operates within amino-acid biosynthesis; L-lysine biosynthesis via DAP pathway; (S)-tetrahydrodipicolinate from L-aspartate: step 4/4. Functionally, catalyzes the conversion of 4-hydroxy-tetrahydrodipicolinate (HTPA) to tetrahydrodipicolinate. This is 4-hydroxy-tetrahydrodipicolinate reductase from Aromatoleum aromaticum (strain DSM 19018 / LMG 30748 / EbN1) (Azoarcus sp. (strain EbN1)).